A 145-amino-acid chain; its full sequence is Early nodulin-like protein 21 (145 aa).

The signal sequence occupies residues 1–17; sequence MFLWLVIVLTISASVSS. A Phytocyanin domain is found at 18-116; sequence YEHKLNWVVP…GQKMIVEVIS (99 aa). N-linked (GlcNAc...) asparagine glycosylation is found at asparagine 30 and asparagine 71. The cysteines at positions 70 and 104 are disulfide-linked. Serine 116 carries GPI-anchor amidated serine lipidation. Residues 117 to 145 constitute a propeptide, removed in mature form; the sequence is RDHTTTSAAPPAAFAVLLCFFSLSLYFVA.

This sequence belongs to the early nodulin-like (ENODL) family. As to expression, mostly expressed in leaves and flowers, and, to a lower extent, in roots and stems, but barely in seedlings and seeds.

It localises to the cell membrane. Functionally, may act as a carbohydrate transporter. This is Early nodulin-like protein 21 from Arabidopsis thaliana (Mouse-ear cress).